Consider the following 392-residue polypeptide: Tyrosine--tRNA ligase (392 aa).

The short motif at 41 to 50 is the 'HIGH' region element; sequence PTAPDLHLGH. Positions 225-229 match the 'KMSKS' region motif; that stretch reads KMSKS. Residue lysine 228 participates in ATP binding. Residues 330 to 390 form the S4 RNA-binding domain; that stretch reads LRAVDFLVKI…VGKKKFYRVV (61 aa).

Belongs to the class-I aminoacyl-tRNA synthetase family. TyrS type 2 subfamily. In terms of assembly, homodimer.

Its subcellular location is the cytoplasm. It carries out the reaction tRNA(Tyr) + L-tyrosine + ATP = L-tyrosyl-tRNA(Tyr) + AMP + diphosphate + H(+). Catalyzes the attachment of tyrosine to tRNA(Tyr) in a two-step reaction: tyrosine is first activated by ATP to form Tyr-AMP and then transferred to the acceptor end of tRNA(Tyr). The chain is Tyrosine--tRNA ligase from Aquifex aeolicus (strain VF5).